An 865-amino-acid polypeptide reads, in one-letter code: Bifunctional uridylyltransferase/uridylyl-removing enzyme (865 aa).

Residues 1 to 318 (MPHVDLNPLK…FPRPDSDARL (318 aa)) form a uridylyltransferase region. The tract at residues 319-675 (IDDDFRNLRE…VRPTEHGEGL (357 aa)) is uridylyl-removing. In terms of domain architecture, HD spans 437–559 (VDQHTLAVVR…VGDERRLAAL (123 aa)). 2 consecutive ACT domains span residues 676-762 (QVMV…RLPH) and 789-865 (RLSV…QQAA). A disordered region spans residues 747–767 (DPHAARHAHAPRRLPHSHARR). A compositionally biased stretch (basic residues) spans 751-767 (ARHAHAPRRLPHSHARR).

This sequence belongs to the GlnD family. Mg(2+) is required as a cofactor.

It catalyses the reaction [protein-PII]-L-tyrosine + UTP = [protein-PII]-uridylyl-L-tyrosine + diphosphate. It carries out the reaction [protein-PII]-uridylyl-L-tyrosine + H2O = [protein-PII]-L-tyrosine + UMP + H(+). Uridylyltransferase (UTase) activity is inhibited by glutamine, while glutamine activates uridylyl-removing (UR) activity. Its function is as follows. Modifies, by uridylylation and deuridylylation, the PII regulatory proteins (GlnB and homologs), in response to the nitrogen status of the cell that GlnD senses through the glutamine level. Under low glutamine levels, catalyzes the conversion of the PII proteins and UTP to PII-UMP and PPi, while under higher glutamine levels, GlnD hydrolyzes PII-UMP to PII and UMP (deuridylylation). Thus, controls uridylylation state and activity of the PII proteins, and plays an important role in the regulation of nitrogen assimilation and metabolism. In Bordetella parapertussis (strain 12822 / ATCC BAA-587 / NCTC 13253), this protein is Bifunctional uridylyltransferase/uridylyl-removing enzyme.